The following is a 102-amino-acid chain: Small ribosomal subunit protein uS10 (102 aa).

This sequence belongs to the universal ribosomal protein uS10 family. As to quaternary structure, part of the 30S ribosomal subunit.

Functionally, involved in the binding of tRNA to the ribosomes. The polypeptide is Small ribosomal subunit protein uS10 (Syntrophus aciditrophicus (strain SB)).